Consider the following 251-residue polypeptide: MLLIPAIDLKDGQCVRLKQGDMDQATIFSEDPAAMARKWVDLGARRLHLVDLNGAFAGKPKNLDAIEAILDEVGDEIPVQLGGGIRSLETVEKYLDAGLSYVIIGTAAVKDPGFLRDACTAFAGNIIVGLDAKDGKVATDGWSKLTGHEVIDLALKFEDYGVESIVYTDIGRDGMLQGINIEATVKLAQAVGIPVIASGGLSNLADIDSLCEVEEHGVEGVICGRAIYSGDLDFAAAQKRADELNGELDNA.

The active-site Proton acceptor is Asp8. The active-site Proton donor is Asp131.

It belongs to the HisA/HisF family.

It is found in the cytoplasm. It carries out the reaction 1-(5-phospho-beta-D-ribosyl)-5-[(5-phospho-beta-D-ribosylamino)methylideneamino]imidazole-4-carboxamide = 5-[(5-phospho-1-deoxy-D-ribulos-1-ylimino)methylamino]-1-(5-phospho-beta-D-ribosyl)imidazole-4-carboxamide. Its pathway is amino-acid biosynthesis; L-histidine biosynthesis; L-histidine from 5-phospho-alpha-D-ribose 1-diphosphate: step 4/9. The sequence is that of 1-(5-phosphoribosyl)-5-[(5-phosphoribosylamino)methylideneamino] imidazole-4-carboxamide isomerase from Burkholderia ambifaria (strain MC40-6).